We begin with the raw amino-acid sequence, 73 residues long: MNNRKYSINNGFMSYLRKKFTTFLRKKSTYRIKSNTDYYQENEKLIHKNNIKIPYKVKVIRKRCSSSDDDVFI.

This is an uncharacterized protein from Swinepox virus (strain Kasza) (SWPV).